We begin with the raw amino-acid sequence, 194 residues long: uncharacterized protein (194 aa).

The interval 25–156 (PSWACRRGGP…ESPLGTLPCS (132 aa)) is disordered. The segment covering 43 to 57 (GPSTVPVTPTAGSCQ) has biased composition (polar residues). Residues 104–113 (SSSPGPSFHL) are compositionally biased toward low complexity.

This is an uncharacterized protein from Homo sapiens (Human).